We begin with the raw amino-acid sequence, 561 residues long: SH3 domain-binding protein 2 (561 aa).

One can recognise a PH domain in the interval 26-130 (GVAKAGYLHK…WMALLRREIG (105 aa)). Disordered regions lie at residues 160 to 316 (VDIS…GACS) and 333 to 451 (KLKS…YEKV). Residues 170-188 (DNEDYEHDDEDDSYLEPDS) show a composition bias toward acidic residues. 2 positions are modified to phosphotyrosine; by SYK: Y174 and Y183. Residues 201–210 (PPAYPPPPVP) carry the SH3-binding motif. Composition is skewed to pro residues over residues 202 to 213 (PAYPPPPVPTPR) and 233 to 242 (PLLPPPPPKH). Basic and acidic residues predominate over residues 252-266 (EDSKRDPLCPRRAEP). Phosphoserine is present on S278. Pro residues predominate over residues 342–354 (RGPPTSEPPPVPA). 2 positions are modified to phosphoserine: S416 and S427. Y448 carries the phosphotyrosine; by SYK modification. Residues 457-555 (VFVNTTESCE…HQSLLLRHPY (99 aa)) form the SH2 domain.

Post-translationally, phosphorylated. Phosphorylation at Tyr-448 may stimulate the activity of the LYN kinase. As to expression, expressed in a variety of tissues including lung, liver, skeletal muscle, kidney and pancreas.

Binds differentially to the SH3 domains of certain proteins of signal transduction pathways. Binds to phosphatidylinositols; linking the hemopoietic tyrosine kinase fes to the cytoplasmic membrane in a phosphorylation dependent mechanism. This chain is SH3 domain-binding protein 2 (SH3BP2), found in Homo sapiens (Human).